We begin with the raw amino-acid sequence, 169 residues long: Peptide deformylase (169 aa).

Fe cation-binding residues include Cys-91 and His-133. Residue Glu-134 is part of the active site. Position 137 (His-137) interacts with Fe cation.

This sequence belongs to the polypeptide deformylase family. The cofactor is Fe(2+).

The catalysed reaction is N-terminal N-formyl-L-methionyl-[peptide] + H2O = N-terminal L-methionyl-[peptide] + formate. Functionally, removes the formyl group from the N-terminal Met of newly synthesized proteins. Requires at least a dipeptide for an efficient rate of reaction. N-terminal L-methionine is a prerequisite for activity but the enzyme has broad specificity at other positions. This is Peptide deformylase from Haemophilus influenzae (strain ATCC 51907 / DSM 11121 / KW20 / Rd).